Here is a 314-residue protein sequence, read N- to C-terminus: tRNA dimethylallyltransferase (314 aa).

Residue 36 to 43 (GPTASGKT) coordinates ATP. 38–43 (TASGKT) provides a ligand contact to substrate. The interval 61-64 (DSVQ) is interaction with substrate tRNA.

It belongs to the IPP transferase family. In terms of assembly, monomer. Requires Mg(2+) as cofactor.

The enzyme catalyses adenosine(37) in tRNA + dimethylallyl diphosphate = N(6)-dimethylallyladenosine(37) in tRNA + diphosphate. Its function is as follows. Catalyzes the transfer of a dimethylallyl group onto the adenine at position 37 in tRNAs that read codons beginning with uridine, leading to the formation of N6-(dimethylallyl)adenosine (i(6)A). The chain is tRNA dimethylallyltransferase from Sorangium cellulosum (strain So ce56) (Polyangium cellulosum (strain So ce56)).